A 782-amino-acid polypeptide reads, in one-letter code: Transcription factor SOX-30 (782 aa).

Disordered regions lie at residues 1 to 37 (MERA…AQPV), 95 to 117 (LPPG…AAAA), and 139 to 226 (PPQS…DALK). Composition is skewed to pro residues over residues 7-35 (EPPP…PPAQ) and 97-106 (PGGPGVPPAP). Residues 203 to 226 (LDGRRSDEKKAKLEAEEAPRDALK) are compositionally biased toward basic and acidic residues. Residues 366–434 (VKRPMNAFMV…KHREEFPGWV (69 aa)) constitute a DNA-binding region (HMG box). Disordered regions lie at residues 501-604 (PTPA…STCP), 704-724 (YPDE…DGPP), and 756-782 (ASAP…LRNL). Polar residues predominate over residues 512–522 (TLFQPSVSSTG). Over residues 525 to 538 (AVPPPSLTPRPSLP) the composition is skewed to pro residues. The span at 555–574 (SGSSRSVKRSTPGSLESTTR) shows a compositional bias: polar residues. Over residues 704-718 (YPDEHTHSEDSRSCE) the composition is skewed to basic and acidic residues.

Interacts with CTNNB1, competitively inhibiting CTNNB1-TCF7L2/TCF4 interaction. In terms of tissue distribution, expressed in the lung (at protein level). Expressed in testes (at protein level). Expressed in preleptotene spermatocytes, round spermatids, and elongated spermatids in the testis (at protein level). Expressed in pachytene spermatocytes during stages 3 to 8 of spermatogenesis (at protein level). Increased expression in diplotene spermatocytes at stage 9-11 and in metaphase spermatocytes or secondary spermatocytes at stage 12. Expressed in ovaries.

Its subcellular location is the nucleus. The protein localises to the cytoplasm. Its function is as follows. Acts both as a transcriptional activator and a repressor. Binds to the DNA sequence 5'-ACAAT-3' and shows a preference for guanine residues surrounding this core motif. Binds to its own promoter and activates its own transcription. Required to activate the expression of postmeiotic genes involved in spermiogenesis. Binds to the promoter region of CTNNB1 and represses its transcription which leads to inhibition of Wnt signaling. Also inhibits Wnt signaling by binding to the CTNNB1 protein, preventing interaction of CTNNB1 with TCF7L2/TCF4. The sequence is that of Transcription factor SOX-30 (Sox30) from Mus musculus (Mouse).